Reading from the N-terminus, the 722-residue chain is Polyribonucleotide nucleotidyltransferase (722 aa).

Residues Asp487 and Asp493 each coordinate Mg(2+). The region spanning 554-613 (PRMVSFKIHPDKIREVIGKGGATIQALTKETGCSIDIKDDGTVTIASTSAEGMAEAKARI) is the KH domain. One can recognise an S1 motif domain in the interval 623-691 (GKIYEGPVVK…ERGRLRLSLK (69 aa)).

This sequence belongs to the polyribonucleotide nucleotidyltransferase family. Mg(2+) serves as cofactor.

It localises to the cytoplasm. It catalyses the reaction RNA(n+1) + phosphate = RNA(n) + a ribonucleoside 5'-diphosphate. Involved in mRNA degradation. Catalyzes the phosphorolysis of single-stranded polyribonucleotides processively in the 3'- to 5'-direction. The chain is Polyribonucleotide nucleotidyltransferase from Polynucleobacter necessarius subsp. necessarius (strain STIR1).